A 195-amino-acid chain; its full sequence is Antigenic thaumatin-like protein ARB_01183 (195 aa).

A signal peptide spans 1 to 22; the sequence is MHSNTAVIALSALAALVPAALA. 2 disulfide bridges follow: Cys-125–Cys-153 and Cys-130–Cys-137. The segment at 171–195 is disordered; it reads GPKKMFKPVQEKAANRPRHPHARPE. Basic residues predominate over residues 185-195; that stretch reads NRPRHPHARPE.

This sequence belongs to the thaumatin family.

It is found in the secreted. Functionally, might be involved in the inhibition of growth of fungal competitors and pathogenicity. This Arthroderma benhamiae (strain ATCC MYA-4681 / CBS 112371) (Trichophyton mentagrophytes) protein is Antigenic thaumatin-like protein ARB_01183.